An 881-amino-acid polypeptide reads, in one-letter code: Dynamin-like GTPase MGM1, mitochondrial (881 aa).

The transit peptide at 1–59 (MNASPVRLLILRRQLATHPAILYSSPYIKSPLVHLHSRMSNVHRSAHANALSFVITRRS) directs the protein to the mitochondrion. Residues 60–72 (ISHFPKIISKIIR) are Mitochondrial matrix-facing. Residues 73 to 92 (LPIYVGGGMAAAGSYIAYKM) traverse the membrane as a helical; Signal-anchor for type II membrane protein segment. Residues 93–881 (EEASSFTKDK…KSYKGVSKNL (789 aa)) lie on the Mitochondrial intermembrane side of the membrane. A disordered region spans residues 145–183 (ATSLDDDESKRQGDPKDDDDEDDDDEDDENDSVDTTQDE). The span at 160–176 (KDDDDEDDDDEDDENDS) shows a compositional bias: acidic residues. Positions 207-505 (HLTLPSIVVI…LEISMSNALE (299 aa)) constitute a Dynamin-type G domain. The G1 motif stretch occupies residues 217–224 (GSQSSGKS). GTP contacts are provided by Ser220, Ser221, Gly222, Lys223, Ser224, Ser225, and Gly239. A Mg(2+)-binding site is contributed by Ser224. The G2 motif stretch occupies residues 243–245 (VTR). Mg(2+)-binding residues include Thr244 and Asp317. The tract at residues 317-320 (DLPG) is G3 motif. Positions 385–388 (TKLD) are G4 motif. Residues Lys386, Asp388, and Thr415 each coordinate GTP. The tract at residues 414 to 417 (ITKT) is G5 motif. A paddle region region spans residues 668–780 (STADQVENCI…KMLKNKCHST (113 aa)). Cys777 and Cys786 are joined by a disulfide. The 93-residue stretch at 780–872 (TIEKDRCPEV…KIDSILVFKK (93 aa)) folds into the GED domain.

It belongs to the TRAFAC class dynamin-like GTPase superfamily. Dynamin/Fzo/YdjA family. Oligomeric complex consisting of membrane-bound and soluble forms of MGM1. Associates with FZO1 through interaction with the intermembrane space domain of UGO1 which binds FZO1 through its cytoplasmic domain. Cleavage of the transit peptide by mitochondrial processing protease (MPP) produces a long integral membrane form of MGM1 (l-MGM1). Further processing by the rhomboid protease PCP1 produces a short peripheral membrane form of MGM1 (s-MGM1). Both isoforms are required for full activity.

It localises to the mitochondrion inner membrane. Its subcellular location is the mitochondrion intermembrane space. It catalyses the reaction GTP + H2O = GDP + phosphate + H(+). In terms of biological role, dynamin-related GTPase that is essential for normal mitochondrial morphology by mediating fusion of the mitochondrial inner membranes, regulating cristae morphology and maintaining respiratory chain function. Exists in two forms: the transmembrane, long form (Dynamin-like GTPase MGM1, long form; L-MGM1), which is tethered to the inner mitochondrial membrane, and the short soluble form (Dynamin-like GTPase MGM1, short form; S-MGM1), which results from proteolytic cleavage and localizes in the intermembrane space. Both forms (L-MGM1 and S-MGM1) cooperate to catalyze the fusion of the mitochondrial inner membrane. The equilibrium between L-MGM1 and S-MGM1 is essential: excess levels of S-MGM1, following loss of mitochondrial membrane potential, lead to an impaired equilibrium between L-MGM1 and S-MGM1, inhibiting mitochondrial fusion. Plays a role in the maintenance and remodeling of mitochondrial cristae, some invaginations of the mitochondrial inner membrane that provide an increase in the surface area. Probably acts by forming helical filaments at the inside of inner membrane tubes with the shape and dimensions of crista junctions. Functionally, constitutes the transmembrane long form (L-MGM1) that plays a central role in mitochondrial inner membrane fusion and cristae morphology. L-MGM1 and the soluble short form (S-MGM1) form higher-order helical assemblies that coordinate the fusion of mitochondrial inner membranes. Inner membrane-anchored L-MGM1 molecules initiate membrane remodeling by recruiting soluble S-MGM1 to rapidly polymerize into a flexible cylindrical scaffold encaging the mitochondrial inner membrane. Once at the membrane surface, the formation of S-MGM1 helices induce bilayer curvature. MGM1 dimerization through the paddle region, which inserts into cardiolipin-containing membrane, promotes GTP hydrolysis and the helical assembly of a flexible MGM1 lattice on the membrane, which drives membrane curvature and mitochondrial fusion. Constitutes the soluble short form (S-MGM1) generated by cleavage by PCP1, which plays a central role in mitochondrial inner membrane fusion and cristae morphology. The transmembrane long form (L-MGM1) and the S-MGM1 form higher-order helical assemblies that coordinate the fusion of mitochondrial inner membranes. Inner membrane-anchored L-MGM1 molecules initiate membrane remodeling by recruiting soluble S-MGM1 to rapidly polymerize into a flexible cylindrical scaffold encaging the mitochondrial inner membrane. Once at the membrane surface, the formation of S-MGM1 helices induce bilayer curvature. MGM1 dimerization through the paddle region, which inserts into cardiolipin-containing membrane, promotes GTP hydrolysis and the helical assembly of a flexible MGM1 lattice on the membrane, which drives membrane curvature and mitochondrial fusion. Excess levels of S-MGM1 produced by cleavage by PCP1 following stress conditions that induce loss of mitochondrial membrane potential, lead to an impaired equilibrium between L-MGM1 and S-MGM1, thereby inhibiting mitochondrial fusion. In Saccharomyces cerevisiae (strain ATCC 204508 / S288c) (Baker's yeast), this protein is Dynamin-like GTPase MGM1, mitochondrial.